The chain runs to 178 residues: Putative type II secretion system M-type protein YghD (178 aa).

The Cytoplasmic segment spans residues 1–39 (MLRDKFIHYFQQWRERQLSRGEHWLAQHLAGRSPREKGM). A helical membrane pass occupies residues 40 to 60 (LLAAVVFLFSVGYYVLIWQPL). Residues 61-178 (SERIEQQETI…NVQRLEFGRG (118 aa)) are Periplasmic-facing.

It belongs to the GSP M family.

The protein localises to the cell inner membrane. In terms of biological role, involved in a type II secretion system (T2SS, formerly general secretion pathway, GSP) for the export of folded proteins across the outer membrane. The chain is Putative type II secretion system M-type protein YghD (yghD) from Escherichia coli (strain K12).